Consider the following 167-residue polypeptide: uncharacterized protein (167 aa).

Residues 9 to 167 (PVMRRLTLQD…DCEVRMLREL (159 aa)) form the N-acetyltransferase domain.

This sequence belongs to the acetyltransferase family.

This is an uncharacterized protein from Escherichia coli (strain K12).